The primary structure comprises 854 residues: Armadillo repeat-containing protein 2 (854 aa).

Disordered regions lie at residues 1 to 116, 140 to 194, and 206 to 255; these read MLSS…SFPK, QGML…PLLT, and EVSL…ETDT. A compositionally biased stretch (low complexity) spans 58 to 73; the sequence is PASSRSPENRPPSSFS. 2 stretches are compositionally biased toward polar residues: residues 74–87 and 162–187; these read LHASSFELSDSKPI and KPVSVGSSTARRNGTHLTASSATGQL. ARM repeat units lie at residues 255-294, 298-337, 356-396, 401-442, 455-496, 499-540, 544-583, 585-605, 606-649, 651-692, 694-733, and 735-777; these read TEVDEVFWKARIVPILHELENEEDIEEMCAACTQLHRTLE, MLGKKFKRRTVLLKALYKLVDADSDPLSLKLAKLILALKV, EKND…ALKF, PGFL…HLLV, PLTR…KLTS, DCCA…NLTA, QARELFSRETGSVETLLTLFQSFYHHKENSPKLQLSEAKP, AEAEDVLVKLTRVLANIAIHP, RIGP…NLSF, QVKS…NLSQ, HDVCNFLMQKNVHKFMITLLEAKHQDICFSACGVLLNLTV, and KEKR…NFSE.

Functionally, required for sperm flagellum axoneme organization and function. Involved in axonemal central pair complex assembly and/or stability. The sequence is that of Armadillo repeat-containing protein 2 from Mus musculus (Mouse).